The following is a 263-amino-acid chain: Type-2Bb cytolytic delta-endotoxin (263 aa).

It belongs to the cyt1/cyt2 endotoxin family. Active after proteolytic processing.

Its function is as follows. Kills the larvae of dipteran insects by making pores in the epithelial cell membrane of the insect midgut. This chain is Type-2Bb cytolytic delta-endotoxin (cyt2Bb1), found in Bacillus thuringiensis subsp. jegathesan.